Consider the following 112-residue polypeptide: MDDKVEEPIDFIMKHCLWQSHSRNWDRERQNEEILKKTKQLLCGEPVDLSTPSDRCYWVDAVSLVDAYRERYTWINAMSKDELAQLIDTLKARLDYLTISGSLNEELSDKNY.

Hexamer of two alpha, two beta, and two delta chains. Requires iron-sulfur cluster as cofactor.

The enzyme catalyses N2 + 8 reduced [2Fe-2S]-[ferredoxin] + 16 ATP + 16 H2O = H2 + 8 oxidized [2Fe-2S]-[ferredoxin] + 2 NH4(+) + 16 ADP + 16 phosphate + 6 H(+). In terms of biological role, the key enzymatic reactions in nitrogen fixation are catalyzed by the nitrogenase complex, which has 2 components: the iron protein (component 2) and a component 1 which is either a molybdenum-iron protein, a vanadium-iron, or an iron-iron protein. This chain is Nitrogenase iron-iron protein delta chain (anfG), found in Azomonas macrocytogenes (Azotobacter macrocytogenes).